The sequence spans 892 residues: Transmembrane channel-like protein 2-B (892 aa).

The interval 29–125 (GINQNLRREE…DESMSEGEMA (97 aa)) is disordered. Basic residues-rich tracts occupy residues 48-58 (RRAKKRRMNRR) and 66-77 (RSKKMRMRVRKN). Positions 103-112 (PSSCSSSSDN) are enriched in low complexity. Helical transmembrane passes span 235–255 (LVLF…MGIP), 275–295 (FSVL…YGFY), 308–328 (LPLS…MVVI), 403–423 (LANV…YAVV), 444–464 (EVEI…EAIA), 482–502 (IFAL…DEVN), 616–636 (LIFN…LVGI), 671–691 (FYMG…IYSI), and 736–756 (GLII…LNAV). Over residues 772 to 785 (QMQRDEEKNRRNNK) the composition is skewed to basic and acidic residues. Disordered regions lie at residues 772–791 (QMQR…TNQV) and 796–892 (EDLL…PPRR). Residues 862–878 (PRQPGPLPGNPRGPPPG) show a composition bias toward pro residues.

Belongs to the TMC family. In adults, expression is restricted to the hair cells of inner ear and lateral line organ. Expressed at higher levels in the larval lateral-line neuromasts than in the larval inner ear.

Its subcellular location is the membrane. In terms of biological role, probable component of the mechanotransducer (MET) non-selective cation channel. This chain is Transmembrane channel-like protein 2-B, found in Danio rerio (Zebrafish).